A 203-amino-acid chain; its full sequence is Somatotropin (203 aa).

The N-terminal stretch at 1–17 (MNRVILLLSVMCVGVSS) is a signal peptide. Position 18 is a pyrrolidone carboxylic acid (Q18). 2 disulfides stabilise this stretch: C68-C176 and C193-C201.

It belongs to the somatotropin/prolactin family.

Its subcellular location is the secreted. Its function is as follows. Growth hormone plays an important role in growth control and is involved in the regulation of several anabolic processes. Implicated as an osmoregulatory substance important for seawater adaptation. The chain is Somatotropin (gh) from Verasper variegatus (Spotted flounder).